Here is a 183-residue protein sequence, read N- to C-terminus: Peptidyl-prolyl cis-trans isomerase H (183 aa).

The PPIase cyclophilin-type domain maps to 19-182; sequence FFDVALGGEP…QDVVIIQCGE (164 aa).

It belongs to the cyclophilin-type PPIase family. PPIase H subfamily.

It localises to the nucleus. The enzyme catalyses [protein]-peptidylproline (omega=180) = [protein]-peptidylproline (omega=0). Its function is as follows. PPIases accelerate the folding of proteins. It catalyzes the cis-trans isomerization of proline imidic peptide bonds in oligopeptides. The polypeptide is Peptidyl-prolyl cis-trans isomerase H (cyp3) (Emericella nidulans (strain FGSC A4 / ATCC 38163 / CBS 112.46 / NRRL 194 / M139) (Aspergillus nidulans)).